A 553-amino-acid chain; its full sequence is Cytochrome P450 monooxygenase alnD (553 aa).

The helical transmembrane segment at leucine 351–valine 371 threads the bilayer. Cysteine 493 lines the heme pocket. N-linked (GlcNAc...) asparagine glycosylation occurs at asparagine 518.

Belongs to the cytochrome P450 family. The cofactor is heme.

It localises to the membrane. It functions in the pathway polyketide biosynthesis. Functionally, cytochrome P450 monooxygenase; part of the gene cluster that mediates the biosynthesis of asperlin, a polyketide showing anti-inflammatory, antitumor and antibiotic activities. The first step of the asperlin biosynthesis is the production of the intermediate 2,4,6-octatrienoic acid by the highly redusing polyketide synthase alnA with cleavage of the PKS product by the esterase alnB. 2,4,6-octatrienoic acid is further converted to asperlin via several steps involving the remaining enzymes from the cluster. This is Cytochrome P450 monooxygenase alnD from Emericella nidulans (strain FGSC A4 / ATCC 38163 / CBS 112.46 / NRRL 194 / M139) (Aspergillus nidulans).